We begin with the raw amino-acid sequence, 261 residues long: F-actin-capping protein subunit alpha (261 aa).

It belongs to the F-actin-capping protein alpha subunit family. Heterodimer of an alpha and a beta subunit.

Its function is as follows. F-actin-capping proteins bind in a Ca(2+)-independent manner to the fast growing ends of actin filaments (barbed end) thereby blocking the exchange of subunits at these ends. Unlike other capping proteins (such as gelsolin and severin), these proteins do not sever actin filaments. The chain is F-actin-capping protein subunit alpha (CAP1) from Eremothecium gossypii (strain ATCC 10895 / CBS 109.51 / FGSC 9923 / NRRL Y-1056) (Yeast).